Reading from the N-terminus, the 360-residue chain is MTTLLEQRSSANLWHRFGNWITSTENRMYVGWFGVLLIPTALTAAIVFILAFIAAPPVDVDGIREPVSGSLLYGNNIITATVVPTSAAIGLHLYPIWEAASLDEWLYNGGPYQMIVLHFLIAIYAYMGRQWELSYRLGMRPWIPVAFSAPVAAATAVLLIYPIGQGSFSDGMMLGISGTFNFMIVFSPEHNILMHPFHMIGVAGVFGGALFSAMHGSLVTSTLVRETSEVESANTGYKFGQEEETYNIVAAHGYFGRLIFQYASFNNSRSLHFFLAAWPVIGIWFAALGISTMSFNLNGFNFNNSILDHQGRTIDTWADLLNRANLGIEVMHERNAHNFPLDLASGEVQPIALTAPAIAS.

3 helical membrane-spanning segments follow: residues 29–46 (YVGWFGVLLIPTALTAAI), 118–133 (HFLIAIYAYMGRQWEL), and 142–156 (WIPVAFSAPVAAATA). Histidine 118 provides a ligand contact to chlorophyll a. Tyrosine 126 is a binding site for pheophytin a. Aspartate 170 and glutamate 189 together coordinate [CaMn4O5] cluster. The chain crosses the membrane as a helical span at residues 197 to 218 (FHMIGVAGVFGGALFSAMHGSL). Histidine 198 is a chlorophyll a binding site. Residues histidine 215 and 264–265 (SF) each bind a quinone. Fe cation is bound at residue histidine 215. Histidine 272 lines the Fe cation pocket. A helical membrane pass occupies residues 274 to 288 (FLAAWPVIGIWFAAL). Histidine 332, glutamate 333, aspartate 342, and alanine 344 together coordinate [CaMn4O5] cluster. Positions 345–360 (SGEVQPIALTAPAIAS) are excised as a propeptide.

This sequence belongs to the reaction center PufL/M/PsbA/D family. As to quaternary structure, PSII is composed of 1 copy each of membrane proteins PsbA, PsbB, PsbC, PsbD, PsbE, PsbF, PsbH, PsbI, PsbJ, PsbK, PsbL, PsbM, PsbT, PsbX, PsbY, PsbZ, Psb30/Ycf12, peripheral proteins PsbO, CyanoQ (PsbQ), PsbU, PsbV and a large number of cofactors. It forms dimeric complexes. Requires The D1/D2 heterodimer binds P680, chlorophylls that are the primary electron donor of PSII, and subsequent electron acceptors. It shares a non-heme iron and each subunit binds pheophytin, quinone, additional chlorophylls, carotenoids and lipids. D1 provides most of the ligands for the Mn4-Ca-O5 cluster of the oxygen-evolving complex (OEC). There is also a Cl(-1) ion associated with D1 and D2, which is required for oxygen evolution. The PSII complex binds additional chlorophylls, carotenoids and specific lipids. as cofactor. In terms of processing, tyr-161 forms a radical intermediate that is referred to as redox-active TyrZ, YZ or Y-Z. Post-translationally, C-terminally processed by CtpA; processing is essential to allow assembly of the oxygen-evolving complex and thus photosynthetic growth.

The protein resides in the cellular thylakoid membrane. It catalyses the reaction 2 a plastoquinone + 4 hnu + 2 H2O = 2 a plastoquinol + O2. Photosystem II (PSII) is a light-driven water:plastoquinone oxidoreductase that uses light energy to abstract electrons from H(2)O, generating O(2) and a proton gradient subsequently used for ATP formation. It consists of a core antenna complex that captures photons, and an electron transfer chain that converts photonic excitation into a charge separation. The D1/D2 (PsbA/PsbD) reaction center heterodimer binds P680, the primary electron donor of PSII as well as several subsequent electron acceptors. In Nostoc sp. (strain PCC 7120 / SAG 25.82 / UTEX 2576), this protein is Photosystem II protein D1 3.